Here is a 380-residue protein sequence, read N- to C-terminus: Putative 8-amino-7-oxononanoate synthase (380 aa).

Residue Arg-18 participates in substrate binding. 106-107 lines the pyridoxal 5'-phosphate pocket; sequence GY. His-131 contributes to the substrate binding site. Pyridoxal 5'-phosphate-binding positions include Ser-179, 205–208, and 236–239; these read DEAH and TFGK. Position 239 is an N6-(pyridoxal phosphate)lysine (Lys-239). Residue Thr-352 coordinates substrate.

It belongs to the class-II pyridoxal-phosphate-dependent aminotransferase family. BioF subfamily. As to quaternary structure, homodimer. Pyridoxal 5'-phosphate is required as a cofactor.

The enzyme catalyses 6-carboxyhexanoyl-[ACP] + L-alanine + H(+) = (8S)-8-amino-7-oxononanoate + holo-[ACP] + CO2. The protein operates within cofactor biosynthesis; biotin biosynthesis. Catalyzes the decarboxylative condensation of pimeloyl-[acyl-carrier protein] and L-alanine to produce 8-amino-7-oxononanoate (AON), [acyl-carrier protein], and carbon dioxide. The protein is Putative 8-amino-7-oxononanoate synthase (bioF) of Neisseria gonorrhoeae (strain ATCC 700825 / FA 1090).